The chain runs to 547 residues: MSSAKLGSASEDVSRRDANYHPTVWGDFFLTHSSDFLENNDSILEKHEELKQEVRNLLVVETSDLPSKIQLTDDIIRLGVGYHFETEIKAQLEKLHDHQLHLNFDLLTTSVWFRLLRGHGFSISSDVFKRFKNTKGEFETEDARTLWCLYEATHLRVDGEDILEEAIQFSRKKLEALLPELSFPLNECVRDALHIPYHRNVQRLAARQYIPQYDAEPTKIESLSLFAKIDFNMLQALHQRELREASRWWKEFDFPSKLPYARDRIAEGYYWMMGAHFEPKFSLSRKFLNRIIGITSLIDDTYDVYGTLEEVTLFTEAVERWDIEAVKDIPKYMQVIYIGMLGIFEDFKDNLINARGKDYCIDYAIEVFKEIVRSYQREAEYFHTGYVPSYDEYMENSIISGGYKMFIILMLIGRGEFELKETLDWASTIPEMVKASSLIARYIDDLQTYKAEEERGETVSAVRCYMREYDVSEEEACKKMREMIEIEWKRLNKTTLEADEVSSSVVIPSLNFTRVLEVMYDKGDGYSDSQGVTKDRIAALLRHAIEI.

Mg(2+) is bound by residues Asp-299, Asp-303, and Asp-444. Positions 299–303 (DDTYD) match the DDXXD motif motif.

The protein belongs to the terpene synthase family. Requires Mg(2+) as cofactor.

It catalyses the reaction (2E,6E)-farnesyl diphosphate = delta-guaiene + diphosphate. It carries out the reaction (2E,6E)-farnesyl diphosphate = alpha-guaiene + diphosphate. Its pathway is secondary metabolite biosynthesis; terpenoid biosynthesis. In terms of biological role, sesquiterpene synthase involved in the biosynthesis of delta-guaiene (78.2%) and alpha-guaiene (20.9%), two structures composed of five- and seven-membered rings. Also produces 0.9% of alpha-humulene. The polypeptide is Delta-guaiene synthase 3 (C4) (Aquilaria crassna (Eagle wood)).